Reading from the N-terminus, the 485-residue chain is D-alanine--D-alanyl carrier protein ligase (485 aa).

T144 to S145 is an ATP binding site. A D-alanine-binding site is contributed by D189. Residue N284 to T289 participates in ATP binding. A D-alanine-binding site is contributed by V293. Residues D365 and K473 each coordinate ATP. K473 lines the D-alanine pocket.

It belongs to the ATP-dependent AMP-binding enzyme family. DltA subfamily.

The protein resides in the cytoplasm. It catalyses the reaction holo-[D-alanyl-carrier protein] + D-alanine + ATP = D-alanyl-[D-alanyl-carrier protein] + AMP + diphosphate. It participates in cell wall biogenesis; lipoteichoic acid biosynthesis. In terms of biological role, catalyzes the first step in the D-alanylation of lipoteichoic acid (LTA), the activation of D-alanine and its transfer onto the D-alanyl carrier protein (Dcp) DltC. In an ATP-dependent two-step reaction, forms a high energy D-alanyl-AMP intermediate, followed by transfer of the D-alanyl residue as a thiol ester to the phosphopantheinyl prosthetic group of the Dcp. D-alanylation of LTA plays an important role in modulating the properties of the cell wall in Gram-positive bacteria, influencing the net charge of the cell wall. This chain is D-alanine--D-alanyl carrier protein ligase, found in Staphylococcus epidermidis (strain ATCC 35984 / DSM 28319 / BCRC 17069 / CCUG 31568 / BM 3577 / RP62A).